We begin with the raw amino-acid sequence, 449 residues long: Glycine--tRNA ligase (449 aa).

2 residues coordinate substrate: Arg100 and Glu158. ATP is bound by residues 190–192 (RNE), 200–205 (FRVREF), 275–276 (EL), and 319–322 (GIER). 205–209 (FEQFE) contacts substrate. Substrate is bound at residue 315–319 (EPSVG).

Belongs to the class-II aminoacyl-tRNA synthetase family. In terms of assembly, homodimer.

It is found in the cytoplasm. It catalyses the reaction tRNA(Gly) + glycine + ATP = glycyl-tRNA(Gly) + AMP + diphosphate. Catalyzes the attachment of glycine to tRNA(Gly). The sequence is that of Glycine--tRNA ligase from Mycoplasma pneumoniae (strain ATCC 29342 / M129 / Subtype 1) (Mycoplasmoides pneumoniae).